The primary structure comprises 338 residues: MTKIAVLGAGSWGTALANTAAENGHDVRLWTHHSDQAVEINHNKTNTKYLPDATLSEQLFATDDMAVAVKDSDIVLCVVPTKAVREVAKQLADTLAQLNHQVILAHATKGLEQGTYKRISEMLSEEIPETYRSALVVVSGPSHAEDVIKHDLTAVSIGGSDENATKLLQRVLSNKTFRAYTNHDLLGSELFAALKNIVAIGSGALVGLGYGANAQAALLTRSLVEMRQLGLAMGAQEKTLYELAGIGDLIVTGMSPNSRNYRAGLGLGQGKSLKQVSDDMGMVIEGVNTTKAVYDFSQQYHVDMPITKAIYQVLYDNKPLSEAINDLMSRPLKSEDAL.

Residues S11, W12, H32, H33, and K109 each contribute to the NADPH site. Positions 109, 140, and 142 each coordinate sn-glycerol 3-phosphate. Residue A144 coordinates NADPH. Sn-glycerol 3-phosphate is bound by residues K195, D248, S258, R259, and N260. Catalysis depends on K195, which acts as the Proton acceptor. R259 is an NADPH binding site. 2 residues coordinate NADPH: V283 and E285.

The protein belongs to the NAD-dependent glycerol-3-phosphate dehydrogenase family.

It is found in the cytoplasm. The catalysed reaction is sn-glycerol 3-phosphate + NAD(+) = dihydroxyacetone phosphate + NADH + H(+). It carries out the reaction sn-glycerol 3-phosphate + NADP(+) = dihydroxyacetone phosphate + NADPH + H(+). It participates in membrane lipid metabolism; glycerophospholipid metabolism. Functionally, catalyzes the reduction of the glycolytic intermediate dihydroxyacetone phosphate (DHAP) to sn-glycerol 3-phosphate (G3P), the key precursor for phospholipid synthesis. In Leuconostoc citreum (strain KM20), this protein is Glycerol-3-phosphate dehydrogenase [NAD(P)+].